The chain runs to 91 residues: Potassium channel toxin TtrKIK (91 aa).

The N-terminal stretch at 1–25 (MVATNRCCVFALLFALLLVHSLTEA) is a signal peptide. Residues 26 to 44 (GKGKEVLGKIKDKLIEAKD) constitute a propeptide that is removed on maturation. The BetaSPN-type CS-alpha/beta domain maps to 58-91 (EYACPAIEKFCEDHCAAKKAVGKCDDFKCNCIKL). 3 cysteine pairs are disulfide-bonded: C61/C81, C68/C86, and C72/C88.

It belongs to the long chain scorpion toxin family. Class 2 subfamily. In terms of tissue distribution, expressed by the venom gland.

The protein resides in the secreted. The full peptide presents antibacterial and cytotoxic activities. The synthetic C-terminus (AA 33-76) inhibits voltage-gated potassium channels Kv1.1/KCNA1, Kv1.2/KCNA2, and Kv1.3/KCNA3. This chain is Potassium channel toxin TtrKIK, found in Tityus trivittatus (Argentinean scorpion).